We begin with the raw amino-acid sequence, 400 residues long: MMNVHPVKGPVATGGERPHEADHPTSLVASFGADQPLRLDCGVDLAPFQIAYQTYGTLNADKSNAILVCHALTMDQHIANVHPITGKPGGWLTLVGPGKPIDTDRYFVICSNVIGSCMGSTGPASTNPATGKVWGLDFPVITIPDMVRAQAMLVDRLGIDKLFCVVGGSMGGMQVLQWSVAYPERVFSAMPIACATRHSAQNIAFHELGRQAVMADPDWAHGRYVETGAHPHRGLAVARMAAHITYLSDAALHRKFGRRMQDRELPTFSFDADFQVESYLRYQGSSFVERFDANSYLYLTRAMDYFDIAADHHGVLAAAFRGTQTRFCVVSFTSDWLFPTPESRAIVHALNAGGARVSFAEVETDKGHDAFLLDEPEFIDIARAFLHSAATARGLDKAGR.

The disordered stretch occupies residues 1–22; it reads MMNVHPVKGPVATGGERPHEAD. The region spanning 64 to 374 is the AB hydrolase-1 domain; that stretch reads NAILVCHALT…DKGHDAFLLD (311 aa). Ser169 functions as the Nucleophile in the catalytic mechanism. Arg239 contacts substrate. Catalysis depends on residues Asp335 and His368. Asp369 contributes to the substrate binding site.

Belongs to the AB hydrolase superfamily. MetX family. In terms of assembly, homodimer.

The protein localises to the cytoplasm. The enzyme catalyses L-homoserine + acetyl-CoA = O-acetyl-L-homoserine + CoA. It functions in the pathway amino-acid biosynthesis; L-methionine biosynthesis via de novo pathway; O-acetyl-L-homoserine from L-homoserine: step 1/1. Its function is as follows. Transfers an acetyl group from acetyl-CoA to L-homoserine, forming acetyl-L-homoserine. This is Homoserine O-acetyltransferase from Rhodopseudomonas palustris (strain HaA2).